The chain runs to 141 residues: Mitochondrial import inner membrane translocase subunit tim16 (141 aa).

Positions 59-117 (EACKILNVNKPADGTAANMEEVMERFKRLFDANDPEKGGSFYLQSKVVRARERLEAEIK) are J-like. A disordered region spans residues 119 to 141 (KMEEKQAEEEVKEGWNPKIYKDR).

It belongs to the TIM16/PAM16 family. In terms of assembly, heterodimer with tim14/pam18. Component of the PAM complex, at least composed of hsp70-5/ssc1, grpe/mge1, tim44, un-4/pam16, pam17 and tim14/pam18.

The protein resides in the mitochondrion inner membrane. In terms of biological role, essential component of the PAM complex, a complex required for the translocation of transit peptide-containing proteins from the inner membrane into the mitochondrial matrix in an ATP-dependent manner. In the complex, it is required to regulate activity of mtHSP70 (hsp70-5) via its interaction with tim14/pam18. May act by positioning tim14/pam18 in juxtaposition to mtHSP70 at the translocon to maximize ATPase stimulation. This is Mitochondrial import inner membrane translocase subunit tim16 (un-4) from Neurospora crassa (strain ATCC 24698 / 74-OR23-1A / CBS 708.71 / DSM 1257 / FGSC 987).